Here is an 88-residue protein sequence, read N- to C-terminus: Large ribosomal subunit protein bL27 (88 aa).

The segment at 1–22 is disordered; the sequence is MAQKKAGGSSRNGRDSAGRRLG.

This sequence belongs to the bacterial ribosomal protein bL27 family.

The protein is Large ribosomal subunit protein bL27 of Gluconobacter oxydans (strain 621H) (Gluconobacter suboxydans).